We begin with the raw amino-acid sequence, 146 residues long: D-aminoacyl-tRNA deacylase (146 aa).

Residues G137–P138 carry the Gly-cisPro motif, important for rejection of L-amino acids motif.

The protein belongs to the DTD family. As to quaternary structure, homodimer.

The protein localises to the cytoplasm. It carries out the reaction glycyl-tRNA(Ala) + H2O = tRNA(Ala) + glycine + H(+). It catalyses the reaction a D-aminoacyl-tRNA + H2O = a tRNA + a D-alpha-amino acid + H(+). An aminoacyl-tRNA editing enzyme that deacylates mischarged D-aminoacyl-tRNAs. Also deacylates mischarged glycyl-tRNA(Ala), protecting cells against glycine mischarging by AlaRS. Acts via tRNA-based rather than protein-based catalysis; rejects L-amino acids rather than detecting D-amino acids in the active site. By recycling D-aminoacyl-tRNA to D-amino acids and free tRNA molecules, this enzyme counteracts the toxicity associated with the formation of D-aminoacyl-tRNA entities in vivo and helps enforce protein L-homochirality. In Bacillus cereus (strain G9842), this protein is D-aminoacyl-tRNA deacylase.